Consider the following 359-residue polypeptide: MKSMVKKLKQSLRSGSLEKRKEKEKDIQEEKWFLDNGSIFLKELIADCNGKSIPIRNFSSDQILKATSNFGSSCFVTAEGFYVWYKGIIEDRSYMIKRFSEYKVTQYRVAEVYNEIVLSARMSNHNNFLKLIGFCLEFSLPVLVFEYAEHGVLNHRGGVIVNGEEVILPLSLRLKIGKEIANAVTYLHMAFPKILIHRHIKPRNVFLDENWTPKLSDFSISINLPEGKSRIEVECVQGTIGYLDPVYYTTKMVTEYTDVYSFGVFLMVILTGKPALASTSSDGDYKHIASYVKGFHENGQLDGVIDPKVMEDITSAQKVHVEACVVLALRCCELRDENRPKMIQIAKELKQIETLFRRS.

Residues M1 to Q10 are compositionally biased toward basic residues. Residues M1–R20 form a disordered region. In terms of domain architecture, Protein kinase spans L64–F356. Residues F70–A78 and K97 each bind ATP.

The protein belongs to the protein kinase superfamily. Ser/Thr protein kinase family. ZRK subfamily.

The sequence is that of Non-functional pseudokinase ZRK2 from Arabidopsis thaliana (Mouse-ear cress).